The primary structure comprises 352 residues: MQNRQVANATKVAVAGASGYAGGEILRLLLGHPAYADGRLRIGALTAATSAGSTLGEHHPHLTPLAHRVVEPTEAAVLGGHDAVFLALPHGHSAVLAQQLSPETLIIDCGADFRLTDAAVWERFYGSSHAGSWPYGLPELPGARDQLRGTRRIAVPGCYPTAALLALFPALAADLIEPAVTVVAVSGTSGAGRAATTDLLGAEVIGSARAYNIAGVHRHTPEIAQGLRAVTDRDVSVSFTPVLIPASRGILATCTARTRSPLSQLRAAYEKAYHAEPFIYLMPEGQLPRTGAVIGSNAAHIAVAVDEDAQTFVAIAAIDNLVKGTAGAAVQSMNLALGWPETDGLSVVGVAP.

The active site involves cysteine 158.

This sequence belongs to the NAGSA dehydrogenase family. Type 1 subfamily.

The protein resides in the cytoplasm. The enzyme catalyses N-acetyl-L-glutamate 5-semialdehyde + phosphate + NADP(+) = N-acetyl-L-glutamyl 5-phosphate + NADPH + H(+). It functions in the pathway amino-acid biosynthesis; L-arginine biosynthesis; N(2)-acetyl-L-ornithine from L-glutamate: step 3/4. Catalyzes the NADPH-dependent reduction of N-acetyl-5-glutamyl phosphate to yield N-acetyl-L-glutamate 5-semialdehyde. In Mycobacterium bovis (strain BCG / Tokyo 172 / ATCC 35737 / TMC 1019), this protein is N-acetyl-gamma-glutamyl-phosphate reductase.